The sequence spans 368 residues: Phosphate acyltransferase (368 aa).

The segment at 335–368 (VSLGDGEHDAGGAGPASPAAGHHAEPSAAQSSKA) is disordered. The segment covering 349–368 (PASPAAGHHAEPSAAQSSKA) has biased composition (low complexity).

It belongs to the PlsX family. As to quaternary structure, homodimer. Probably interacts with PlsY.

Its subcellular location is the cytoplasm. The enzyme catalyses a fatty acyl-[ACP] + phosphate = an acyl phosphate + holo-[ACP]. The protein operates within lipid metabolism; phospholipid metabolism. Its function is as follows. Catalyzes the reversible formation of acyl-phosphate (acyl-PO(4)) from acyl-[acyl-carrier-protein] (acyl-ACP). This enzyme utilizes acyl-ACP as fatty acyl donor, but not acyl-CoA. This is Phosphate acyltransferase from Burkholderia multivorans (strain ATCC 17616 / 249).